The sequence spans 1295 residues: MEILRGSPALSAFRINKLLVRCRDARLAVDDIYAEYIHFADVSAALDEDALSRLQRLLKYGPSLAEHQPQGRLLLVTPRPGTRSPWSSKATDIAHNCGLPQIKRLERGLAYYIQAPQLSEPQWGYLAALLHDRMMETVFTRLEEAAALFAQHAPAPVTLVDVLGEGRGALEAANLALGLALAQDEIDYLFAAFTRLGRNPSDVELYMFAQANSEHCRHKIFNADWVIDGQPQAKSLFKMIKNTFEQTPEYVLSAYKDNASVMEGSAVGRFFPDAQAGRYDYHQEATHILMKVETHNHPTAISPWPGAATGSGGEIRDEGATGRGAKPKAGLVGFSVSNLRIPGFEQPWEEDFGRPERIVSALDIMTDGPLGGAAFNNEFGRPALTGYFRTYEERVDSHNGVELRGYHKPVMLAGGIGNIRASHVQKGEISVGAKLIVLGGPAMNIGLGGGAASSMASGQSDADLDFASVQRDNPEMERRCQEVIDRCWQRGEENPILFIHDVGAGGLSNAMPELVSDGGRGGRFQLREIPNDEPGMSPLEVWCNESQERYVMAVAPERLAEFDAICRRECAPYAVIGEATDALHLSLDDAHYDNRPIDLPLDVLLGKTPKMQREAVSLQAAGFPLNRDGIKLAEAINRVLHLPAVAEKTFLITIGDRSVTGMVARDQMVGPWQVPVADCAVTTASLDSYYGEAMSLGERAPVALLNFAASARLAVGEALTNLAATHIGDIKRVKLSANWMAAAGHPGEDAGLYQAVKAVGEELCPALGLTIPVGKDSMSMKTRWQHGAESREMTAPLSLVITAFARVEDVRATVTPQLQPARDNVLLLIDLGAGHHALGATALAQVYRQLGDETSDVRDAGQLAAFFRVMQQLVAQGWLLAYHDRADGGLLVTLAEMAFAGHCGIDADIGPLGDDALAALFNEELGAVIQIDEADRDAITALFHQEGLADCLHYLGTAQPGDRFILRAGERSLYSESRTTLRTWWAETSWQMQRLRDNPESADQEHASRQDDNDPGLTVALSFDPKDDIAAPFIAKGARPKVAVLREQGVNSHVEMAAAFHRAGFEAIDVHMSDLFTGVQTLEGFHTLVACGGFSYGDVLGAGEGWAKSVLFNLRVRDEFEAFFHRPQTLALGVCNGCQMMSNLRELIPGAELWPRFVRNKSERFEARFSLVEVTQSQSLLLQGMVGSRLPIAVSHGEGRVEVRDAAHLAAIEHAGLVALRYVDNYGKVTENYPANPNGSPNGITAVTNASGRVTLTMPHPERVFRTVSHSWHPAEWGEDGPWMRLFRNARKQLG.

Residues 304–326 are disordered; that stretch reads WPGAATGSGGEIRDEGATGRGAK. Residues 306 to 317, 385 to 387, and Ala677 each bind ATP; these read GAATGSGGEIRD and TGY. Residues Asp678, Glu717, Asn721, and Asp884 each coordinate Mg(2+). Basic and acidic residues predominate over residues 995–1012; that stretch reads LRDNPESADQEHASRQDD. Residues 995 to 1017 are disordered; that stretch reads LRDNPESADQEHASRQDDNDPGL. The 254-residue stretch at 1042-1295 folds into the Glutamine amidotransferase type-1 domain; it reads VAVLREQGVN…LFRNARKQLG (254 aa). Residue Cys1135 is the Nucleophile of the active site. Residues His1260 and Glu1262 contribute to the active site.

It in the N-terminal section; belongs to the FGAMS family. Monomer.

It is found in the cytoplasm. It carries out the reaction N(2)-formyl-N(1)-(5-phospho-beta-D-ribosyl)glycinamide + L-glutamine + ATP + H2O = 2-formamido-N(1)-(5-O-phospho-beta-D-ribosyl)acetamidine + L-glutamate + ADP + phosphate + H(+). It participates in purine metabolism; IMP biosynthesis via de novo pathway; 5-amino-1-(5-phospho-D-ribosyl)imidazole from N(2)-formyl-N(1)-(5-phospho-D-ribosyl)glycinamide: step 1/2. Phosphoribosylformylglycinamidine synthase involved in the purines biosynthetic pathway. Catalyzes the ATP-dependent conversion of formylglycinamide ribonucleotide (FGAR) and glutamine to yield formylglycinamidine ribonucleotide (FGAM) and glutamate. This Sodalis glossinidius (strain morsitans) protein is Phosphoribosylformylglycinamidine synthase.